A 445-amino-acid chain; its full sequence is Tubulin beta chain (445 aa).

GTP contacts are provided by Gln-11, Glu-69, Ser-138, Gly-142, Thr-143, Gly-144, Asn-204, and Asn-226. Mg(2+) is bound at residue Glu-69. The tract at residues Gln-426–Ala-445 is disordered. The span at Thr-429–Ala-445 shows a compositional bias: acidic residues.

This sequence belongs to the tubulin family. In terms of assembly, dimer of alpha and beta chains. A typical microtubule is a hollow water-filled tube with an outer diameter of 25 nm and an inner diameter of 15 nM. Alpha-beta heterodimers associate head-to-tail to form protofilaments running lengthwise along the microtubule wall with the beta-tubulin subunit facing the microtubule plus end conferring a structural polarity. Microtubules usually have 13 protofilaments but different protofilament numbers can be found in some organisms and specialized cells. Interacts with DCX/apicortin; the interaction stabilizes microtubule assembly. Requires Mg(2+) as cofactor.

It is found in the cytoplasm. It localises to the cytoskeleton. Its function is as follows. Tubulin is the major constituent of microtubules, a cylinder consisting of laterally associated linear protofilaments composed of alpha- and beta-tubulin heterodimers. Microtubules grow by the addition of GTP-tubulin dimers to the microtubule end, where a stabilizing cap forms. Below the cap, tubulin dimers are in GDP-bound state, owing to GTPase activity of alpha-tubulin. This Plasmodium falciparum protein is Tubulin beta chain.